The sequence spans 336 residues: MSDLTPPSQILLRHTREFAERSVIFSGDLQDLLPAQFNAKQIRVHTQEYHHWRLLSPVLKNDIQFGVLPSEDLVSKTDTVIFYWPKNKAQAQFQLEHLCSLFPSQTNIFIVGENRSGIGSAKDLLAENVGLHKMDAARRCSLYYGCLKQKPVFNMESQWRRYQVKDVQIKTLPGVFSANQLDEGSQLLLSSFDIPLSGKVLDLACGAGVLGTILARQSPQIELTLSDVNAAALESSRANLAVNHIKARVVPSDLYSDIPERFNLILSNLPFHKGLKTDIKMIEKCIEEAPGHLYKGGKLRLVANAFLPYPKLLNRTFGHYEVLTQNARFKVYQATL.

This sequence belongs to the methyltransferase superfamily. RsmC family. Monomer.

It is found in the cytoplasm. The enzyme catalyses guanosine(1207) in 16S rRNA + S-adenosyl-L-methionine = N(2)-methylguanosine(1207) in 16S rRNA + S-adenosyl-L-homocysteine + H(+). In terms of biological role, specifically methylates the guanine in position 1207 of 16S rRNA in the 30S particle. The sequence is that of Ribosomal RNA small subunit methyltransferase C from Hamiltonella defensa subsp. Acyrthosiphon pisum (strain 5AT).